The chain runs to 401 residues: 1-deoxy-D-xylulose 5-phosphate reductoisomerase (401 aa).

Positions 11, 12, 13, 14, 38, 39, and 125 each coordinate NADPH. Lys-126 lines the 1-deoxy-D-xylulose 5-phosphate pocket. Position 127 (Glu-127) interacts with NADPH. Position 151 (Asp-151) interacts with Mn(2+). Ser-152, Glu-153, Ser-179, and His-202 together coordinate 1-deoxy-D-xylulose 5-phosphate. Residue Glu-153 participates in Mn(2+) binding. Residue Gly-208 participates in NADPH binding. Residues Ser-215, Asn-220, Lys-221, and Glu-224 each coordinate 1-deoxy-D-xylulose 5-phosphate. Residue Glu-224 participates in Mn(2+) binding.

Belongs to the DXR family. It depends on Mg(2+) as a cofactor. The cofactor is Mn(2+).

It catalyses the reaction 2-C-methyl-D-erythritol 4-phosphate + NADP(+) = 1-deoxy-D-xylulose 5-phosphate + NADPH + H(+). The protein operates within isoprenoid biosynthesis; isopentenyl diphosphate biosynthesis via DXP pathway; isopentenyl diphosphate from 1-deoxy-D-xylulose 5-phosphate: step 1/6. Catalyzes the NADPH-dependent rearrangement and reduction of 1-deoxy-D-xylulose-5-phosphate (DXP) to 2-C-methyl-D-erythritol 4-phosphate (MEP). In Paraburkholderia phytofirmans (strain DSM 17436 / LMG 22146 / PsJN) (Burkholderia phytofirmans), this protein is 1-deoxy-D-xylulose 5-phosphate reductoisomerase.